Consider the following 2009-residue polypeptide: Sodium channel protein type 1 subunit alpha (2009 aa).

The Cytoplasmic segment spans residues 1 to 128 (MEQTVLVPPG…KIAIKILVHS (128 aa)). Over residues 28 to 48 (RIAEEKAKNPKPDKKDDDENG) the composition is skewed to basic and acidic residues. A disordered region spans residues 28-60 (RIAEEKAKNPKPDKKDDDENGPKPNSDLEAGKN). An I repeat occupies 110–454 (ILTPFNPLRK…QQMLEQLKKQ (345 aa)). A helical transmembrane segment spans residues 129 to 146 (LFSMLIMCTILTNCVFMT). The Extracellular portion of the chain corresponds to 147-152 (MSNPPD). Residues 153–177 (WTKNVEYTFTGIYTFESLIKIIARG) form a helical membrane-spanning segment. The Cytoplasmic portion of the chain corresponds to 178–188 (FCLEDFTFLRD). A helical transmembrane segment spans residues 189 to 205 (PWNWLDFTVITFAYVTE). Residues 206–213 (FVDLGNVS) lie on the Extracellular side of the membrane. N211 is a glycosylation site (N-linked (GlcNAc...) asparagine). Residues 214–235 (ALRTFRVLRALKTISVIPGLKT) traverse the membrane as a helical segment. Residues 236-245 (IVGALIQSVK) lie on the Cytoplasmic side of the membrane. The chain crosses the membrane as a helical span at residues 246–269 (KLSDVMILTVFCLSVFALIGLQLF). Residues 270-369 (MGNLRNKCVQ…YGYTSFDTFS (100 aa)) lie on the Extracellular side of the membrane. 2 disulfides stabilise this stretch: C277-C345 and C336-C351. 5 N-linked (GlcNAc...) asparagine glycosylation sites follow: N284, N295, N301, N306, and N338. The pore-forming intramembrane region spans 370–384 (WAFLSLFRLMTQDFW). At 385–397 (ENLYQLTLRAAGK) the chain is on the extracellular side. The helical transmembrane segment at 398–423 (TYMIFFVLVIFLGSFYLINLILAVVA) threads the bilayer. At 424–768 (MAYEEQNQAT…HIVNLVVMDP (345 aa)) the chain is on the cytoplasmic side. Positions 458–528 (AQQAAAATAS…EFHKSESEDS (71 aa)) are disordered. The residue at position 470 (S470) is a Phosphoserine. Positions 479–492 (LSDSSSEASKLSSK) are enriched in low complexity. The segment covering 495–506 (KERRNRRKKRKQ) has biased composition (basic residues). Positions 507–528 (KEQSGGEEKDDDEFHKSESEDS) are enriched in basic and acidic residues. Phosphoserine is present on residues S523, S525, S550, S551, S607, and S730. A disordered region spans residues 584-628 (VGSENDFADDEHSTFEDNESRRDSLFVPRRHGERRNSNLSQTSRS). Positions 593–607 (DEHSTFEDNESRRDS) are enriched in basic and acidic residues. The stretch at 750 to 1022 (CSPYWLKVKH…QIAVDRMHKG (273 aa)) is one II repeat. The chain crosses the membrane as a helical span at residues 769 to 787 (FVDLAITICIVLNTLFMAM). The Extracellular portion of the chain corresponds to 788-797 (EHYPMTEHFN). Residues 798 to 820 (HVLTVGNLVFTGIFTAEMFLKII) form a helical membrane-spanning segment. The Cytoplasmic portion of the chain corresponds to 821-830 (AMDPYYYFQE). Residues 831–849 (GWNIFDGFIVTLSLVELGL) traverse the membrane as a helical segment. Over 850-854 (ANVEG) the chain is Extracellular. A helical membrane pass occupies residues 855-874 (LSVLRSFRLLRVFKLAKSWP). Residues 875–891 (TLNMLIKIIGNSVGALG) lie on the Cytoplasmic side of the membrane. Residues 892–912 (NLTLVLAIIVFIFAVVGMQLF) form a helical membrane-spanning segment. At 913 to 938 (GKSYKDCVCKIATDCKLPRWHMNDFF) the chain is on the extracellular side. The cysteines at positions 921 and 927 are disulfide-linked. Positions 939–952 (HSFLIVFRVLCGEW) form an intramembrane region, pore-forming. Residues 953–965 (IETMWDCMEVAGQ) lie on the Extracellular side of the membrane. C959 and C968 are oxidised to a cystine. The helical transmembrane segment at 966–992 (AMCLTVFMMVMVIRNLVVLNLFLALLL) threads the bilayer. Over 993–1218 (SSFSADNLAA…RTCFRIVEHN (226 aa)) the chain is Cytoplasmic. The tract at residues 1129 to 1163 (TEDFSSESDLEESKEKLNESSSSSEGSTVDIGAPA) is disordered. Residues 1200 to 1514 (RGKQWWNLRR…KKYYNAMKKL (315 aa)) form an III repeat. The chain crosses the membrane as a helical span at residues 1219-1237 (WFETFIVFMILLSSGALAF). At 1238–1250 (EDIYIDQRKTIKT) the chain is on the extracellular side. The chain crosses the membrane as a helical span at residues 1251 to 1276 (MLEYADKVFTYIFILEMLLKWVAYGY). At 1277–1278 (QT) the chain is on the cytoplasmic side. A helical membrane pass occupies residues 1279–1304 (YFTNAWCWLDFLIVDVSLVSLTANAL). Over 1305–1313 (GYSELGAIK) the chain is Extracellular. A helical transmembrane segment spans residues 1314–1332 (SLRTLRALRPLRALSRFEG). At 1333–1345 (MRVVVNALLGAIP) the chain is on the cytoplasmic side. The helical transmembrane segment at 1346 to 1369 (SIMNVLLVCLIFWLIFSIMGVNLF) threads the bilayer. Residues 1370 to 1415 (AGKFYHCVNTTTGDTFEITEVNNHSDCLKLIERNETARWKNVKVNF) lie on the Extracellular side of the membrane. C1376 and C1396 are joined by a disulfide. 3 N-linked (GlcNAc...) asparagine glycosylation sites follow: N1378, N1392, and N1403. An intramembrane region (pore-forming) is located at residues 1416 to 1433 (DNVGFGYLSLLQVATFKG). The Extracellular segment spans residues 1434 to 1457 (WMDIMYAAVDSRNVELQPKYEESL). Residues 1458-1483 (YMYLYFVIFIIFGSFFTLNLFIGVII) traverse the membrane as a helical segment. Topologically, residues 1484-1541 (DNFNQQKKKFGGQDIFMTEEQKKYYNAMKKLGSKKPQKPIPRPGNKFQGMVFDFVTRQ) are cytoplasmic. S1516 is modified (phosphoserine; by PKC). The IV repeat unit spans residues 1523–1821 (IPRPGNKFQG…WEKFDPDATQ (299 aa)). Residues 1542–1560 (VFDISIMILICLNMVTMMV) form a helical membrane-spanning segment. Residues 1561 to 1571 (ETDDQSDYVTS) lie on the Extracellular side of the membrane. The S1-S2 loop of repeat IV stretch occupies residues 1561–1571 (ETDDQSDYVTS). The chain crosses the membrane as a helical span at residues 1572 to 1593 (ILSRINLVFIVLFTGECVLKLI). Residues 1594 to 1601 (SLRHYYFT) lie on the Cytoplasmic side of the membrane. Residues 1602 to 1623 (IGWNIFDFVVVILSIVGMFLAE) traverse the membrane as a helical segment. The interval 1619 to 1636 (MFLAELIEKYFVSPTLFR) is S3b-S4 loop of repeat IV. Residues 1624-1636 (LIEKYFVSPTLFR) are Extracellular-facing. A helical transmembrane segment spans residues 1637–1655 (VIRLARIGRILRLIKGAKG). Residues 1656-1665 (IRTLLFALMM) lie on the Cytoplasmic side of the membrane. The helical transmembrane segment at 1666-1688 (SLPALFNIGLLLFLVMFIYAIFG) threads the bilayer. Residues 1689–1711 (MSNFAYVKREVGIDDMFNFETFG) are Extracellular-facing. An intramembrane region (pore-forming) is located at residues 1712-1726 (NSMICLFQITTSAGW). Residues 1727-1759 (DGLLAPILNSKPPDCDPNKVNPGSSVKGDCGNP) lie on the Extracellular side of the membrane. C1741 and C1756 form a disulfide bridge. Residues 1760–1788 (SVGIFFFVSYIIISFLVVVNMYIAVILEN) traverse the membrane as a helical segment. Residues 1789 to 2009 (FSVATEESAE…EGKDEKAKGK (221 aa)) are Cytoplasmic-facing. One can recognise an IQ domain in the interval 1915-1944 (EEVSAVIIQRAYRRHLLKRTVKQASFTYNK). A disordered region spans residues 1986 to 2009 (YDRVTKPIVEKHEQEGKDEKAKGK). Residues 1988-2009 (RVTKPIVEKHEQEGKDEKAKGK) show a composition bias toward basic and acidic residues.

Belongs to the sodium channel (TC 1.A.1.10) family. Nav1.1/SCN1A subfamily. In terms of assembly, the Nav1.1 voltage-gated sodium channel consists of an ion-conducting alpha subunit SCN1A which is functional on its own regulated by one or more beta-1 (SCN1B), beta-2 (SCN2B), beta-3 (SCN3B) and beta-4 (SCN4B) subunits. SCN1B and SCN3B are non-covalently associated with SCN1A. SCN2B and SCN4B are disulfide-linked to SCN1A. SCN1B regulates both the expression at the plasma membrane and the voltage dependence of Nav1.1 inactivation. SCN3B and SCN4B reduce Nav1.1 conductance. Probably interacts with TMEM233; modulates the gating properties of NaV1.1. Interacts with FGF13; regulates the steady-state inactivation of Nav.1.1. Phosphorylation at Ser-1516 by PKC in a highly conserved cytoplasmic loop slows inactivation of the sodium channel and reduces peak sodium currents.

The protein resides in the cell membrane. The enzyme catalyses Na(+)(in) = Na(+)(out). With respect to regulation, activated by the spider toxins Hm1a and Hm1b (H.maculata, AC P60992 and AC P0DOC5) eliciting acute pain and mechanical allodynia. Inhibited by the conotoxin GVIIJ. Its function is as follows. Pore-forming subunit of Nav1.1, a voltage-gated sodium (Nav) channel that directly mediates the depolarizing phase of action potentials in excitable membranes. Navs, also called VGSCs (voltage-gated sodium channels) or VDSCs (voltage-dependent sodium channels), operate by switching between closed and open conformations depending on the voltage difference across the membrane. In the open conformation they allow Na(+) ions to selectively pass through the pore, along their electrochemical gradient. The influx of Na(+) ions provokes membrane depolarization, initiating the propagation of electrical signals throughout cells and tissues. By regulating the excitability of neurons, ensures that they respond appropriately to synaptic inputs, maintaining the balance between excitation and inhibition in brain neural circuits. Nav1.1 plays a role in controlling the excitability and action potential propagation from somatosensory neurons, thereby contributing to the sensory perception of mechanically-induced pain. The protein is Sodium channel protein type 1 subunit alpha of Rattus norvegicus (Rat).